Here is a 586-residue protein sequence, read N- to C-terminus: Septin-9 (586 aa).

At Met1 the chain carries N-acetylmethionine. Positions 1–14 (MKKSYSGGTRTSSG) are enriched in low complexity. Disordered stretches follow at residues 1 to 49 (MKKS…RVQT), 62 to 108 (KFQD…SRRT), and 134 to 268 (RAEV…PASR). Ser22 and Ser30 each carry phosphoserine. A phosphothreonine mark is found at Thr38, Thr42, and Thr49. Position 62 is an N6-acetyllysine (Lys62). 4 positions are modified to phosphoserine: Ser82, Ser85, Ser89, and Ser96. A compositionally biased stretch (basic and acidic residues) spans 134–151 (RAEVLGHKTPEPAPRRTE). Thr142 bears the Phosphothreonine mark. A Phosphotyrosine modification is found at Tyr278. The Septin-type G domain maps to 295–567 (QGFEFNIMVV…EAYRVKRLNE (273 aa)). Positions 305-312 (GQSGLGKS) are G1 motif. GTP is bound at residue 305–312 (GQSGLGKS). 2 positions are modified to phosphoserine: Ser327 and Ser332. GTP contacts are provided by residues Thr339, Gly365, 445 to 453 (KADTLTLEE), Gly501, and Arg516. A G3 motif region spans residues 362–365 (DTPG). A G4 motif region spans residues 444 to 447 (AKAD).

This sequence belongs to the TRAFAC class TrmE-Era-EngA-EngB-Septin-like GTPase superfamily. Septin GTPase family. As to quaternary structure, septins polymerize into heterooligomeric protein complexes that form filaments, and associate with cellular membranes, actin filaments, and microtubules. GTPase activity is required for filament formation. Interacts with SEPTIN2, SEPTIN6, SEPTIN7, SEPTIN11 and SEPTIN14. Interacts with RTKN and ARHGEF18. In a mesenchymal cell line, Rho/RTKN signals cause disruption of wild-type septin filaments, but not of those containing isoform 2 variants HNA Trp-106 and Phe-111. In a mesenchymal cell line, isoform 2 variants HNA Trp-106 and Phe-111, but not wild type, form filaments with SEPTIN4. As to expression, widely expressed. Isoforms are differentially expressed in testes, kidney, liver heart, spleen, brain, peripheral blood leukocytes, skeletal muscle and kidney. Specific isoforms appear to demonstrate tissue specificity. Isoform 5 is the most highly expressed in fetal tissue. Isoform 1 is detected in all tissues except the brain and thymus, while isoform 2, isoform 3, and isoform 4 are detected at low levels in approximately half of the fetal tissues.

It localises to the cytoplasm. It is found in the cytoskeleton. In terms of biological role, filament-forming cytoskeletal GTPase. May play a role in cytokinesis (Potential). May play a role in the internalization of 2 intracellular microbial pathogens, Listeria monocytogenes and Shigella flexneri. The sequence is that of Septin-9 from Homo sapiens (Human).